Here is a 123-residue protein sequence, read N- to C-terminus: MKITSLPRLMRVFLPVAVLALPLAWQTAALAQSATCTQGSTCVSVGGNNDPMSKEQARQSQQQWDDTHRLRNKVNNRAEKNFDKYDRAEDAKDNCDRSANFNAYWEPNTERCLDRLSGRQINP.

An N-terminal signal peptide occupies residues 1 to 31; sequence MKITSLPRLMRVFLPVAVLALPLAWQTAALA. The interval 47–66 is disordered; sequence GNNDPMSKEQARQSQQQWDD.

Belongs to the UPF0482 family.

This Yersinia enterocolitica serotype O:8 / biotype 1B (strain NCTC 13174 / 8081) protein is UPF0482 protein YE2026.